We begin with the raw amino-acid sequence, 142 residues long: Large ribosomal subunit protein uL13 (142 aa).

This sequence belongs to the universal ribosomal protein uL13 family. As to quaternary structure, part of the 50S ribosomal subunit.

Functionally, this protein is one of the early assembly proteins of the 50S ribosomal subunit, although it is not seen to bind rRNA by itself. It is important during the early stages of 50S assembly. This Pectobacterium carotovorum subsp. carotovorum (strain PC1) protein is Large ribosomal subunit protein uL13.